The following is a 279-amino-acid chain: Phage-like element PBSX protein XepA (279 aa).

To B.subtilis YqxG/YqdC.

Its function is as follows. Not known; does not seem to be involved in host cell lysis. This is Phage-like element PBSX protein XepA (xepA) from Bacillus subtilis (strain 168).